We begin with the raw amino-acid sequence, 1454 residues long: Probable cleavage and polyadenylation specificity factor subunit 1 (1454 aa).

The segment at 810-843 (EEKEKKAKQTAAQEKEKETEKKKDDAKNEEDQVN) is disordered. Residues 812-843 (KEKKAKQTAAQEKEKETEKKKDDAKNEEDQVN) are compositionally biased toward basic and acidic residues.

Belongs to the CPSF1 family. In terms of assembly, CPSF is a heterotetramer composed of four distinct subunits 160 (cpsf-1), 100 (cpsf-2), 70 (cpsf-3), and 30 kDa (cpsf-4).

The protein localises to the nucleus. CPSF plays a key role in pre-mRNA 3'-end formation, recognizing the AAUAAA signal sequence and interacting with poly(A)polymerase and other factors to bring about cleavage and poly(A) addition. This subunit is involved in the RNA recognition step of the polyadenylation reaction. The polypeptide is Probable cleavage and polyadenylation specificity factor subunit 1 (Caenorhabditis briggsae).